We begin with the raw amino-acid sequence, 92 residues long: UPF0250 protein PD_0532 (92 aa).

This sequence belongs to the UPF0250 family.

This is UPF0250 protein PD_0532 from Xylella fastidiosa (strain Temecula1 / ATCC 700964).